Consider the following 300-residue polypeptide: tRNA pseudouridine synthase B (300 aa).

Catalysis depends on Asp41, which acts as the Nucleophile.

This sequence belongs to the pseudouridine synthase TruB family. Type 1 subfamily.

The catalysed reaction is uridine(55) in tRNA = pseudouridine(55) in tRNA. Responsible for synthesis of pseudouridine from uracil-55 in the psi GC loop of transfer RNAs. The polypeptide is tRNA pseudouridine synthase B (Synechococcus sp. (strain WH7803)).